The sequence spans 1218 residues: Probable RNA-dependent RNA polymerase SHL2 (1218 aa).

It belongs to the RdRP family.

It catalyses the reaction RNA(n) + a ribonucleoside 5'-triphosphate = RNA(n+1) + diphosphate. In terms of biological role, involved in the RNA silencing pathway. Probably required for the generation of small interfering RNAs (siRNAs). Regulates shoot apical meristem (SAM) initiation and maintenance and leaf polarization through the trans-acting siRNAS (ta-siRNAs) pathway which probably modulates the expression of the ARF2, ARF3, ARF4, ARF14 and ARF15 genes. This Oryza sativa subsp. japonica (Rice) protein is Probable RNA-dependent RNA polymerase SHL2 (SHL2).